The following is a 396-amino-acid chain: Phosphoglycerate kinase (396 aa).

Substrate is bound by residues 21–23 (DFN), Arg36, 59–62 (HLGK), Arg119, and Arg156. ATP contacts are provided by residues Lys206, Gly294, Glu325, and 352–355 (GGDS).

Belongs to the phosphoglycerate kinase family. Monomer.

It is found in the cytoplasm. It carries out the reaction (2R)-3-phosphoglycerate + ATP = (2R)-3-phospho-glyceroyl phosphate + ADP. It participates in carbohydrate degradation; glycolysis; pyruvate from D-glyceraldehyde 3-phosphate: step 2/5. The polypeptide is Phosphoglycerate kinase (Listeria monocytogenes serovar 1/2a (strain ATCC BAA-679 / EGD-e)).